Reading from the N-terminus, the 275-residue chain is Formamidopyrimidine-DNA glycosylase (275 aa).

Proline 2 acts as the Schiff-base intermediate with DNA in catalysis. The active-site Proton donor is glutamate 3. The active-site Proton donor; for beta-elimination activity is lysine 58. DNA-binding residues include histidine 91 and arginine 110. The segment at 238-272 (QVYGQTGKPCPRCGQAIVKLKVGGRGTHICPKCQK) adopts an FPG-type zinc-finger fold. Arginine 262 functions as the Proton donor; for delta-elimination activity in the catalytic mechanism.

It belongs to the FPG family. Monomer. Requires Zn(2+) as cofactor.

The enzyme catalyses Hydrolysis of DNA containing ring-opened 7-methylguanine residues, releasing 2,6-diamino-4-hydroxy-5-(N-methyl)formamidopyrimidine.. The catalysed reaction is 2'-deoxyribonucleotide-(2'-deoxyribose 5'-phosphate)-2'-deoxyribonucleotide-DNA = a 3'-end 2'-deoxyribonucleotide-(2,3-dehydro-2,3-deoxyribose 5'-phosphate)-DNA + a 5'-end 5'-phospho-2'-deoxyribonucleoside-DNA + H(+). Functionally, involved in base excision repair of DNA damaged by oxidation or by mutagenic agents. Acts as a DNA glycosylase that recognizes and removes damaged bases. Has a preference for oxidized purines, such as 7,8-dihydro-8-oxoguanine (8-oxoG). Has AP (apurinic/apyrimidinic) lyase activity and introduces nicks in the DNA strand. Cleaves the DNA backbone by beta-delta elimination to generate a single-strand break at the site of the removed base with both 3'- and 5'-phosphates. This Streptococcus pyogenes serotype M6 (strain ATCC BAA-946 / MGAS10394) protein is Formamidopyrimidine-DNA glycosylase.